The sequence spans 235 residues: tRNA pseudouridine synthase B (235 aa).

D48 acts as the Nucleophile in catalysis.

It belongs to the pseudouridine synthase TruB family. Type 1 subfamily.

The catalysed reaction is uridine(55) in tRNA = pseudouridine(55) in tRNA. In terms of biological role, responsible for synthesis of pseudouridine from uracil-55 in the psi GC loop of transfer RNAs. In Parabacteroides distasonis (strain ATCC 8503 / DSM 20701 / CIP 104284 / JCM 5825 / NCTC 11152), this protein is tRNA pseudouridine synthase B.